The sequence spans 187 residues: Adenine phosphoribosyltransferase (187 aa).

Belongs to the purine/pyrimidine phosphoribosyltransferase family. Homodimer.

The protein resides in the cytoplasm. The catalysed reaction is AMP + diphosphate = 5-phospho-alpha-D-ribose 1-diphosphate + adenine. The protein operates within purine metabolism; AMP biosynthesis via salvage pathway; AMP from adenine: step 1/1. Catalyzes a salvage reaction resulting in the formation of AMP, that is energically less costly than de novo synthesis. The sequence is that of Adenine phosphoribosyltransferase from Yersinia pseudotuberculosis serotype I (strain IP32953).